We begin with the raw amino-acid sequence, 165 residues long: Phosphopantetheine adenylyltransferase (165 aa).

Ser-11 provides a ligand contact to substrate. ATP is bound by residues 11–12 (SF) and His-19. The substrate site is built by Lys-43, Thr-76, and Arg-90. Residues 91-93 (GIR), Glu-101, and 126-132 (FSFISSS) each bind ATP.

The protein belongs to the bacterial CoaD family. As to quaternary structure, homohexamer. Mg(2+) serves as cofactor.

Its subcellular location is the cytoplasm. It catalyses the reaction (R)-4'-phosphopantetheine + ATP + H(+) = 3'-dephospho-CoA + diphosphate. Its pathway is cofactor biosynthesis; coenzyme A biosynthesis; CoA from (R)-pantothenate: step 4/5. Functionally, reversibly transfers an adenylyl group from ATP to 4'-phosphopantetheine, yielding dephospho-CoA (dPCoA) and pyrophosphate. The polypeptide is Phosphopantetheine adenylyltransferase (Latilactobacillus sakei subsp. sakei (strain 23K) (Lactobacillus sakei subsp. sakei)).